We begin with the raw amino-acid sequence, 321 residues long: Ribosomal RNA small subunit methyltransferase H (321 aa).

Residues 34 to 36 (GGH), D54, F80, D102, and Q109 contribute to the S-adenosyl-L-methionine site.

This sequence belongs to the methyltransferase superfamily. RsmH family.

The protein localises to the cytoplasm. It catalyses the reaction cytidine(1402) in 16S rRNA + S-adenosyl-L-methionine = N(4)-methylcytidine(1402) in 16S rRNA + S-adenosyl-L-homocysteine + H(+). In terms of biological role, specifically methylates the N4 position of cytidine in position 1402 (C1402) of 16S rRNA. In Blochmanniella floridana, this protein is Ribosomal RNA small subunit methyltransferase H.